Reading from the N-terminus, the 412-residue chain is Glutamate-pyruvate aminotransferase AlaC (412 aa).

K244 is modified (N6-(pyridoxal phosphate)lysine).

This sequence belongs to the class-I pyridoxal-phosphate-dependent aminotransferase family. As to quaternary structure, homodimer. The cofactor is pyridoxal 5'-phosphate.

It localises to the cytoplasm. It carries out the reaction L-alanine + 2-oxoglutarate = pyruvate + L-glutamate. It functions in the pathway amino-acid biosynthesis; L-alanine biosynthesis. In terms of biological role, involved in the biosynthesis of alanine. Catalyzes the transamination of pyruvate by glutamate, leading to the formation of L-alanine and 2-oxoglutarate. Is also able to catalyze the reverse reaction. The sequence is that of Glutamate-pyruvate aminotransferase AlaC from Escherichia coli (strain K12).